Consider the following 393-residue polypeptide: MWWGALSLLFWVPVQAAFLKMETVTVEEGQTLTLTCVTSQTKNVSLQWLAPSGFTIFLNQHPALKSSKYQLLHHSATQLSISVSNVTLREEGVYTCLHYGSSVKTKQVRVTVLVTPFQPTVEALVLRRQNGEKSVVLKCSTERSKPPPQITWLLGEGLEIYGELNHEFEADGKICNTSSMLIARAYGKNSTVHCIIQHEGLHGRKLVAPFQFEDLVADQETSDQETSDAPEQSSLSSQALQQPTSTVSMMENSSIPETDKEEKEHATQDPGLSTEASAQHTGLARRKSGILLLTLVSFLIFILFIIVQLFIMKLRKAHVVWKKESEISEQALESYRSRSNNEETSSQENSSQAPQSKRCMNYITRLYSGAKTKKSAQHWKLGGKHSRVPESIV.

The first 16 residues, 1–16, serve as a signal peptide directing secretion; that stretch reads MWWGALSLLFWVPVQA. The Ig-like V-type domain occupies 17–111; that stretch reads AFLKMETVTV…SVKTKQVRVT (95 aa). Residues 17-289 lie on the Extracellular side of the membrane; sequence AFLKMETVTV…HTGLARRKSG (273 aa). 2 disulfides stabilise this stretch: C36/C96 and C139/C194. Residues N85 and N176 are each glycosylated (N-linked (GlcNAc...) asparagine). Residues 119–208 form the Ig-like C2-type domain; it reads PTVEALVLRR…EGLHGRKLVA (90 aa). A compositionally biased stretch (acidic residues) spans 218 to 228; it reads DQETSDQETSD. Residues 218–280 form a disordered region; the sequence is DQETSDQETS…GLSTEASAQH (63 aa). The span at 229-246 shows a compositional bias: low complexity; it reads APEQSSLSSQALQQPTST. Polar residues predominate over residues 247-256; that stretch reads VSMMENSSIP. Over residues 257–267 the composition is skewed to basic and acidic residues; it reads ETDKEEKEHAT. Residues 270–280 show a composition bias toward polar residues; sequence PGLSTEASAQH. The helical transmembrane segment at 290 to 310 threads the bilayer; the sequence is ILLLTLVSFLIFILFIIVQLF. Residues 311–393 lie on the Cytoplasmic side of the membrane; it reads IMKLRKAHVV…KHSRVPESIV (83 aa). Residues 333–356 are disordered; sequence ESYRSRSNNEETSSQENSSQAPQS. Low complexity predominate over residues 342–352; that stretch reads EETSSQENSSQ. Positions 390–393 match the PDZ-binding motif; that stretch reads ESIV.

The protein belongs to the nectin family. In terms of assembly, monomer. May form homodimer (via Ig-like V-type domain). Interacts (via Ig-like V-type domain) with CADM1 (via Ig-like V-type domain); the interaction competes with CRTAM homodimerization and CADM1 homodimerization. Interacts (via PDZ-binding motif) with SCRIB (via PDZ domain 3); the interaction promotes CRTAM and SCRIB polarization in a subset of CD4+ T-cells. In terms of tissue distribution, in the immune system, expression is restricted to activated class-I MHC-restricted cells, including NKT, NK and CD8+ T-cells (at protein level). Transiently expressed in activated CD8+ T-cells and a subset of activated CD4+ T-cells (at protein level). Expressed in activated intestinal T-cells, specifically intraepithelial CD4+ CD8+ T-cells, intraepithelial CD4+ T-cells and, CD8+ T-cells in the intestine epithelium, lamina propria, Peyer's Patches and mesenteric lymph nodes. Also expressed in spleen, brain and testis.

It is found in the cell membrane. Its function is as follows. Mediates heterophilic cell-cell adhesion which regulates the activation, differentiation and tissue retention of various T-cell subsets. Interaction with CADM1 promotes natural killer (NK) cell cytotoxicity and IFNG/interferon-gamma secretion by CD8+ T-cells in vitro as well as NK cell-mediated rejection of tumors expressing CADM1 in vivo. Regulates CD8+ T-cell proliferation in response to T-cell receptor (TCR) activation. Appears to be dispensable for CD8+ T-cell-mediated cytotoxicity. Interaction with SCRIB promotes the late phase of cellular polarization of a subset of CD4+ T-cells, which in turn regulates TCR-mediated proliferation and IFNG, IL17 and IL22 production. By interacting with CADM1 on CD8+ dendritic cells, regulates the retention of activated CD8+ T-cells within the draining lymph node. Required for the intestinal retention of intraepithelial CD4+ CD8+ T-cells and, to a lesser extent, intraepithelial and lamina propria CD8+ T-cells and CD4+ T-cells. Interaction with CADM1 promotes the adhesion to gut-associated CD103+ dendritic cells, which may facilitate the expression of gut-homing and adhesion molecules on T-cells and the conversion of CD4+ T-cells into CD4+ CD8+ T-cells. This Mus musculus (Mouse) protein is Cytotoxic and regulatory T-cell molecule.